The chain runs to 276 residues: S-adenosylmethionine decarboxylase proenzyme (276 aa).

The active-site Schiff-base intermediate with substrate; via pyruvic acid is Ser-126. The residue at position 126 (Ser-126) is a Pyruvic acid (Ser); by autocatalysis. His-131 functions as the Proton acceptor; for processing activity in the catalytic mechanism. The Proton donor; for catalytic activity role is filled by Cys-154.

It belongs to the prokaryotic AdoMetDC family. Type 2 subfamily. In terms of assembly, heterooctamer of four alpha and four beta chains arranged as a tetramer of alpha/beta heterodimers. Pyruvate serves as cofactor. Post-translationally, is synthesized initially as an inactive proenzyme. Formation of the active enzyme involves a self-maturation process in which the active site pyruvoyl group is generated from an internal serine residue via an autocatalytic post-translational modification. Two non-identical subunits are generated from the proenzyme in this reaction, and the pyruvate is formed at the N-terminus of the alpha chain, which is derived from the carboxyl end of the proenzyme. The post-translation cleavage follows an unusual pathway, termed non-hydrolytic serinolysis, in which the side chain hydroxyl group of the serine supplies its oxygen atom to form the C-terminus of the beta chain, while the remainder of the serine residue undergoes an oxidative deamination to produce ammonia and the pyruvoyl group blocking the N-terminus of the alpha chain.

The catalysed reaction is S-adenosyl-L-methionine + H(+) = S-adenosyl 3-(methylsulfanyl)propylamine + CO2. Its pathway is amine and polyamine biosynthesis; S-adenosylmethioninamine biosynthesis; S-adenosylmethioninamine from S-adenosyl-L-methionine: step 1/1. Functionally, catalyzes the decarboxylation of S-adenosylmethionine to S-adenosylmethioninamine (dcAdoMet), the propylamine donor required for the synthesis of the polyamines spermine and spermidine from the diamine putrescine. This Alcanivorax borkumensis (strain ATCC 700651 / DSM 11573 / NCIMB 13689 / SK2) protein is S-adenosylmethionine decarboxylase proenzyme.